The following is a 271-amino-acid chain: GPN-loop GTPase 3 (271 aa).

13–18 (GAGKST) provides a ligand contact to GTP. A Gly-Pro-Asn (GPN)-loop; involved in dimer interface motif is present at residues 70–72 (GPN). 173 to 176 (SKLD) provides a ligand contact to GTP.

It belongs to the GPN-loop GTPase family. Heterodimers with GPN1 or GPN2. Binds to RNA polymerase II (RNAPII).

Functionally, small GTPase required for proper nuclear import of RNA polymerase II and III (RNAPII and RNAPIII). May act at an RNAP assembly step prior to nuclear import. This is GPN-loop GTPase 3 from Candida glabrata (strain ATCC 2001 / BCRC 20586 / JCM 3761 / NBRC 0622 / NRRL Y-65 / CBS 138) (Yeast).